The following is a 180-amino-acid chain: Ubiquitin-conjugating enzyme E2 20 (180 aa).

A disordered region spans residues 1 to 33 (MAAVNGYQGNTPADPPASNGSKQPAAPTKTVDS). The region spanning 35–180 (SVLKRLQSEL…VEKLYKPPSA (146 aa)) is the UBC core domain. C119 serves as the catalytic Glycyl thioester intermediate.

Belongs to the ubiquitin-conjugating enzyme family. Expressed in all tissues with cell division activities and in mature leaves.

It catalyses the reaction S-ubiquitinyl-[E1 ubiquitin-activating enzyme]-L-cysteine + [E2 ubiquitin-conjugating enzyme]-L-cysteine = [E1 ubiquitin-activating enzyme]-L-cysteine + S-ubiquitinyl-[E2 ubiquitin-conjugating enzyme]-L-cysteine.. Its pathway is protein modification; protein ubiquitination. Functionally, accepts the ubiquitin from the E1 complex and catalyzes its covalent attachment to other proteins. The sequence is that of Ubiquitin-conjugating enzyme E2 20 (UBC20) from Arabidopsis thaliana (Mouse-ear cress).